The primary structure comprises 338 residues: MRILPQEPVIREEQNWLTILKNAISDPKLLLKALNLPEDDFEQSIAARKLFSLRVPQPFIDKIEKGNPQDPLFLQVMCSDLEFVQAEGFSTDPLEEKNANAVPNILHKYRNRLLFMAKGGCAVNCRYCFRRHFPYDENPGNKKSWQLALDYIAAHSEIEEVIFSGGDPLMAKDHELAWLIKHLENIPHLQRLRIHTRLPVVIPQRITDEFCTLLAETRLQTVMVTHINHPNEIDQIFAHAMQKLNAVNVTLLNQSVLLKGVNDDAQILKILSDKLFQTGILPYYLHLLDKVQGASHFLISDIEAMQIYKTLQSLTSGYLVPKLAREIAGEPNKTLYAE.

One can recognise a Radical SAM core domain in the interval 107 to 330 (HKYRNRLLFM…PKLAREIAGE (224 aa)). [4Fe-4S] cluster-binding residues include Cys121, Cys125, and Cys128. An N6-(pyridoxal phosphate)lysine modification is found at Lys333.

It belongs to the radical SAM superfamily. KamA family. [4Fe-4S] cluster serves as cofactor. Requires pyridoxal 5'-phosphate as cofactor.

The enzyme catalyses L-lysine = D-beta-lysine. Its function is as follows. With EpmA is involved in the beta-lysylation step of the post-translational modification of translation elongation factor P (EF-P) on 'Lys-34'. EpmB appears to act before EpmA. Displays lysine 2,3-aminomutase activity, producing (R)-beta-lysine from (S)-alpha-lysine (L-lysine). This is L-lysine 2,3-aminomutase (epmB) from Haemophilus influenzae (strain ATCC 51907 / DSM 11121 / KW20 / Rd).